The following is a 263-amino-acid chain: 3-oxo-5-alpha-steroid 4-dehydrogenase 1 (263 aa).

5 helical membrane passes run 16–33 (MLAALAYLQCAVGCAVLA), 90–110 (ILLAMFLVHYGHRCLIYPFLM), 115–135 (PMPLLACTMAIMFCTFNGYLQ), 155–175 (FLIGFGLWLAGMLINIHSDHI), and 213–233 (YALASWSVQGAAFAFFTFCFL).

It belongs to the steroid 5-alpha reductase family.

It is found in the microsome membrane. The protein resides in the endoplasmic reticulum membrane. It catalyses the reaction a 3-oxo-5alpha-steroid + NADP(+) = a 3-oxo-Delta(4)-steroid + NADPH + H(+). The catalysed reaction is 5alpha-pregnane-3,20-dione + NADP(+) = progesterone + NADPH + H(+). The enzyme catalyses 17beta-hydroxy-5alpha-androstan-3-one + NADP(+) = testosterone + NADPH + H(+). It carries out the reaction androst-4-ene-3,17-dione + NADPH + H(+) = 5alpha-androstan-3,17-dione + NADP(+). Converts testosterone into 5-alpha-dihydrotestosterone and progesterone or corticosterone into their corresponding 5-alpha-3-oxosteroids. It plays a central role in sexual differentiation and androgen physiology. This chain is 3-oxo-5-alpha-steroid 4-dehydrogenase 1 (SRD5A1), found in Macaca fascicularis (Crab-eating macaque).